The chain runs to 257 residues: Protein YIPF5 (257 aa).

The Cytoplasmic portion of the chain corresponds to 1–124; the sequence is MSGFDNLNSG…RASDGSIMNE (124 aa). The segment at 75–106 is interaction with Sec23; it reads PPTPQTFYGDSFEEEPPLLEELGINFDHIWQK. A helical membrane pass occupies residues 125 to 145; sequence TDLAGPVVFCLAFGATLLLAG. Lys-146 is a topological domain (lumenal). The chain crosses the membrane as a helical span at residues 147–167; sequence IQFGYVYGISAIGCLGMFCLL. The Cytoplasmic portion of the chain corresponds to 168–173; it reads NLMSMT. A helical transmembrane segment spans residues 174–194; it reads GVSFGCVASVLGYCLLPMILL. Topologically, residues 195–196 are lumenal; sequence SS. The chain crosses the membrane as a helical span at residues 197-217; that stretch reads FAVVFSLQGMVGILLTATIIG. At 218-236 the chain is on the cytoplasmic side; sequence WCSFSASKIFISALAMDGQ. The chain crosses the membrane as a helical span at residues 237 to 257; sequence QLLVAYPCALLYGVFALISVF.

It belongs to the YIP1 family. As to quaternary structure, interacts with the COPII coat components Sec23 (SEC23A and/or SEC23B) and Sec24 (SEC24A and/or SEC24B). Interacts with YIF1A. May interact with RAB1A. Interacts with YIPF3 and YIPF4.

It is found in the endoplasmic reticulum membrane. It localises to the golgi apparatus. The protein resides in the cis-Golgi network membrane. Its subcellular location is the cytoplasmic vesicle. The protein localises to the COPII-coated vesicle. In terms of biological role, plays a role in transport between endoplasmic reticulum and Golgi. In pancreatic beta cells, required to transport proinsulin from endoplasmic reticulum into the Golgi. The sequence is that of Protein YIPF5 from Rattus norvegicus (Rat).